The chain runs to 167 residues: Bacterial non-heme ferritin (167 aa).

The region spanning 1-145 is the Ferritin-like diiron domain; that stretch reads MLSKDIIKLL…DILDKIELIG (145 aa). Fe cation is bound by residues E17, E50, H53, E94, and Q127.

This sequence belongs to the ferritin family. Prokaryotic subfamily. In terms of assembly, homooligomer of 24 subunits that assemble into a spherical protein shell (12 +/- 1 nM diameter) that can sequester at least 2000 iron atoms.

It localises to the cytoplasm. It catalyses the reaction 4 Fe(2+) + O2 + 6 H2O = 4 iron(III) oxide-hydroxide + 12 H(+). Iron-storage protein. This is Bacterial non-heme ferritin (ftnA) from Helicobacter pylori (strain J99 / ATCC 700824) (Campylobacter pylori J99).